Reading from the N-terminus, the 254-residue chain is Aspartate/glutamate leucyltransferase (254 aa).

It belongs to the R-transferase family. Bpt subfamily.

Its subcellular location is the cytoplasm. It carries out the reaction N-terminal L-glutamyl-[protein] + L-leucyl-tRNA(Leu) = N-terminal L-leucyl-L-glutamyl-[protein] + tRNA(Leu) + H(+). The catalysed reaction is N-terminal L-aspartyl-[protein] + L-leucyl-tRNA(Leu) = N-terminal L-leucyl-L-aspartyl-[protein] + tRNA(Leu) + H(+). Functions in the N-end rule pathway of protein degradation where it conjugates Leu from its aminoacyl-tRNA to the N-termini of proteins containing an N-terminal aspartate or glutamate. The chain is Aspartate/glutamate leucyltransferase from Xylella fastidiosa (strain M23).